A 62-amino-acid chain; its full sequence is Large ribosomal subunit protein bL28 (62 aa).

The interval 1 to 27 (MARKCVVTGRQTRSGNQRSHAMNSNKR) is disordered. A compositionally biased stretch (polar residues) spans 9–26 (GRQTRSGNQRSHAMNSNK).

It belongs to the bacterial ribosomal protein bL28 family.

The chain is Large ribosomal subunit protein bL28 from Oceanobacillus iheyensis (strain DSM 14371 / CIP 107618 / JCM 11309 / KCTC 3954 / HTE831).